The chain runs to 253 residues: 2,3-bisphosphoglycerate-dependent phosphoglycerate mutase (253 aa).

Residues 12 to 19, 25 to 26, Arg64, 91 to 94, Lys102, and 118 to 119 each bind substrate; these read RHGESEWN, TG, ERHY, and RR. His13 functions as the Tele-phosphohistidine intermediate in the catalytic mechanism. Glu91 functions as the Proton donor/acceptor in the catalytic mechanism. The tract at residues 126–148 is disordered; that stretch reads PPLADGSEFSQSDDPRYASIPPE. 187 to 188 is a binding site for substrate; the sequence is GN.

Belongs to the phosphoglycerate mutase family. BPG-dependent PGAM subfamily.

The enzyme catalyses (2R)-2-phosphoglycerate = (2R)-3-phosphoglycerate. Its pathway is carbohydrate degradation; glycolysis; pyruvate from D-glyceraldehyde 3-phosphate: step 3/5. In terms of biological role, catalyzes the interconversion of 2-phosphoglycerate and 3-phosphoglycerate. The sequence is that of 2,3-bisphosphoglycerate-dependent phosphoglycerate mutase from Streptomyces avermitilis (strain ATCC 31267 / DSM 46492 / JCM 5070 / NBRC 14893 / NCIMB 12804 / NRRL 8165 / MA-4680).